The primary structure comprises 476 residues: Probable cytosolic Fe-S cluster assembly factor GJ13047 (476 aa).

[4Fe-4S] cluster is bound by residues Cys23, Cys68, Cys71, Cys74, Cys187, Cys243, Cys395, and Cys399.

Belongs to the NARF family.

Functionally, component of the cytosolic iron-sulfur (Fe/S) protein assembly machinery. Required for maturation of extramitochondrial Fe/S proteins. This is Probable cytosolic Fe-S cluster assembly factor GJ13047 from Drosophila virilis (Fruit fly).